Here is an 833-residue protein sequence, read N- to C-terminus: Leucine--tRNA ligase (833 aa).

The 'HIGH' region signature appears at 41-52 (PYPSGAGLHVGH). A 'KMSKS' region motif is present at residues 610–614 (KMSKS). Lysine 613 serves as a coordination point for ATP.

Belongs to the class-I aminoacyl-tRNA synthetase family.

The protein resides in the cytoplasm. The enzyme catalyses tRNA(Leu) + L-leucine + ATP = L-leucyl-tRNA(Leu) + AMP + diphosphate. The chain is Leucine--tRNA ligase from Streptococcus pyogenes serotype M28 (strain MGAS6180).